The sequence spans 361 residues: Ribosomal RNA large subunit methyltransferase M (361 aa).

S-adenosyl-L-methionine-binding positions include Ser-187, 220–223 (CPGG), Asp-239, Asp-259, and Asp-276. Catalysis depends on Lys-305, which acts as the Proton acceptor.

It belongs to the class I-like SAM-binding methyltransferase superfamily. RNA methyltransferase RlmE family. RlmM subfamily. In terms of assembly, monomer.

It localises to the cytoplasm. The enzyme catalyses cytidine(2498) in 23S rRNA + S-adenosyl-L-methionine = 2'-O-methylcytidine(2498) in 23S rRNA + S-adenosyl-L-homocysteine + H(+). Functionally, catalyzes the 2'-O-methylation at nucleotide C2498 in 23S rRNA. In Shewanella oneidensis (strain ATCC 700550 / JCM 31522 / CIP 106686 / LMG 19005 / NCIMB 14063 / MR-1), this protein is Ribosomal RNA large subunit methyltransferase M.